Consider the following 339-residue polypeptide: D-erythrose-4-phosphate dehydrogenase (339 aa).

Residues 12–13 and Arg81 each bind NAD(+); that span reads RI. Residues 154 to 156, Arg200, 213 to 214, and Arg236 contribute to the substrate site; these read SCT and TR. Cys155 acts as the Nucleophile in catalysis. Asn318 provides a ligand contact to NAD(+).

This sequence belongs to the glyceraldehyde-3-phosphate dehydrogenase family. Epd subfamily. In terms of assembly, homotetramer.

It is found in the cytoplasm. It catalyses the reaction D-erythrose 4-phosphate + NAD(+) + H2O = 4-phospho-D-erythronate + NADH + 2 H(+). The protein operates within cofactor biosynthesis; pyridoxine 5'-phosphate biosynthesis; pyridoxine 5'-phosphate from D-erythrose 4-phosphate: step 1/5. Functionally, catalyzes the NAD-dependent conversion of D-erythrose 4-phosphate to 4-phosphoerythronate. In Cronobacter sakazakii (strain ATCC BAA-894) (Enterobacter sakazakii), this protein is D-erythrose-4-phosphate dehydrogenase.